The sequence spans 312 residues: uncharacterized protein (312 aa).

The protein belongs to the asfivirus CP312R family.

The protein resides in the virion. This is an uncharacterized protein from African swine fever virus (isolate Tick/South Africa/Pretoriuskop Pr4/1996) (ASFV).